The chain runs to 570 residues: Sulfite reductase [NADPH] hemoprotein beta-component (570 aa).

The [4Fe-4S] cluster site is built by C434, C440, C479, and C483. C483 contacts siroheme.

Belongs to the nitrite and sulfite reductase 4Fe-4S domain family. In terms of assembly, alpha(8)-beta(8). The alpha component is a flavoprotein, the beta component is a hemoprotein. Requires siroheme as cofactor. [4Fe-4S] cluster is required as a cofactor.

The enzyme catalyses hydrogen sulfide + 3 NADP(+) + 3 H2O = sulfite + 3 NADPH + 4 H(+). The protein operates within sulfur metabolism; hydrogen sulfide biosynthesis; hydrogen sulfide from sulfite (NADPH route): step 1/1. Its function is as follows. Component of the sulfite reductase complex that catalyzes the 6-electron reduction of sulfite to sulfide. This is one of several activities required for the biosynthesis of L-cysteine from sulfate. In Escherichia fergusonii (strain ATCC 35469 / DSM 13698 / CCUG 18766 / IAM 14443 / JCM 21226 / LMG 7866 / NBRC 102419 / NCTC 12128 / CDC 0568-73), this protein is Sulfite reductase [NADPH] hemoprotein beta-component.